Reading from the N-terminus, the 443-residue chain is uncharacterized protein (443 aa).

The next 4 membrane-spanning stretches (helical) occupy residues 15 to 35 (IYAGAGPAPMLAAAVAWDGLA), 38 to 58 (LGMAAASFSLLISGLTAGPGS), 59 to 79 (AWQGPAAAAMAAAAAPYLSWL), and 181 to 201 (VVTAAPAGAVGVPAALAIPAL). The segment at 231–270 (NFGIGNIGNANLGNGNIGNANLGSGNAGFFNFGNGNDGNT) is 4 X 10 AA approximate repeats.

Belongs to the mycobacterial PPE family.

It is found in the cell membrane. This is an uncharacterized protein from Mycobacterium tuberculosis (strain ATCC 25618 / H37Rv).